Reading from the N-terminus, the 273-residue chain is Ribosomal RNA small subunit methyltransferase A (273 aa).

The S-adenosyl-L-methionine site is built by asparagine 18, leucine 20, glycine 45, glutamate 66, aspartate 91, and asparagine 113.

The protein belongs to the class I-like SAM-binding methyltransferase superfamily. rRNA adenine N(6)-methyltransferase family. RsmA subfamily.

It is found in the cytoplasm. It catalyses the reaction adenosine(1518)/adenosine(1519) in 16S rRNA + 4 S-adenosyl-L-methionine = N(6)-dimethyladenosine(1518)/N(6)-dimethyladenosine(1519) in 16S rRNA + 4 S-adenosyl-L-homocysteine + 4 H(+). Specifically dimethylates two adjacent adenosines (A1518 and A1519) in the loop of a conserved hairpin near the 3'-end of 16S rRNA in the 30S particle. May play a critical role in biogenesis of 30S subunits. This is Ribosomal RNA small subunit methyltransferase A from Escherichia coli O17:K52:H18 (strain UMN026 / ExPEC).